The chain runs to 456 residues: RuvB-like 1 (456 aa).

Residues 1-20 (MKIEEVKSTTKTQRIASHSH) are disordered. 70-77 (GPPGTGKT) provides a ligand contact to ATP.

It belongs to the RuvB family. In terms of assembly, forms homohexameric rings. Can form a dodecamer with ruvbl2 made of two stacked hexameric rings. Is a component of the RNA polymerase II holoenzyme complex. Component of the chromatin-remodeling Ino80 complex. Component of some MLL1/MLL complex.

It localises to the nucleus. It is found in the dynein axonemal particle. It carries out the reaction ATP + H2O = ADP + phosphate + H(+). In terms of biological role, has single-stranded DNA-stimulated ATPase and ATP-dependent DNA helicase (3' to 5') activity suggesting a role in nuclear processes such as recombination and transcription. Proposed core component of the chromatin remodeling Ino80 complex which exhibits DNA- and nucleosome-activated ATPase activity and catalyzes ATP-dependent nucleosome sliding. May act as a negative regulator of embryonic heart growth. This chain is RuvB-like 1 (ruvbl1), found in Danio rerio (Zebrafish).